The primary structure comprises 94 residues: Co-chaperonin GroES (94 aa).

It belongs to the GroES chaperonin family. Heptamer of 7 subunits arranged in a ring. Interacts with the chaperonin GroEL.

It is found in the cytoplasm. Functionally, together with the chaperonin GroEL, plays an essential role in assisting protein folding. The GroEL-GroES system forms a nano-cage that allows encapsulation of the non-native substrate proteins and provides a physical environment optimized to promote and accelerate protein folding. GroES binds to the apical surface of the GroEL ring, thereby capping the opening of the GroEL channel. This is Co-chaperonin GroES from Ehrlichia chaffeensis (strain ATCC CRL-10679 / Arkansas).